A 1318-amino-acid chain; its full sequence is DNA-directed RNA polymerase subunit beta' (1318 aa).

Positions 221, 295, 302, and 305 each coordinate Zn(2+).

The protein belongs to the RNA polymerase beta' chain family. RpoC2 subfamily. As to quaternary structure, in cyanobacteria the RNAP catalytic core is composed of 2 alpha, 1 beta, 1 beta', 1 gamma and 1 omega subunit. When a sigma factor is associated with the core the holoenzyme is formed, which can initiate transcription. It depends on Zn(2+) as a cofactor.

The enzyme catalyses RNA(n) + a ribonucleoside 5'-triphosphate = RNA(n+1) + diphosphate. DNA-dependent RNA polymerase catalyzes the transcription of DNA into RNA using the four ribonucleoside triphosphates as substrates. The protein is DNA-directed RNA polymerase subunit beta' of Synechococcus sp. (strain ATCC 27144 / PCC 6301 / SAUG 1402/1) (Anacystis nidulans).